The primary structure comprises 251 residues: PF03932 family protein CutC (251 aa).

Belongs to the CutC family.

The protein resides in the cytoplasm. The polypeptide is PF03932 family protein CutC (Agrobacterium fabrum (strain C58 / ATCC 33970) (Agrobacterium tumefaciens (strain C58))).